Consider the following 65-residue polypeptide: Large ribosomal subunit protein bL35 (65 aa).

The protein belongs to the bacterial ribosomal protein bL35 family.

In Laribacter hongkongensis (strain HLHK9), this protein is Large ribosomal subunit protein bL35.